The following is a 686-amino-acid chain: Methionine--tRNA ligase (686 aa).

Positions 15–25 match the 'HIGH' region motif; the sequence is PYANGSIHLGH. Residues Cys146, Cys149, Cys159, and Cys162 each contribute to the Zn(2+) site. The short motif at 332–336 is the 'KMSKS' region element; the sequence is KMSKS. An ATP-binding site is contributed by Lys335. The tRNA-binding domain maps to 585–686; the sequence is AFEAVDMRIA…EGAQPGMRVM (102 aa).

Belongs to the class-I aminoacyl-tRNA synthetase family. MetG type 1 subfamily. In terms of assembly, homodimer. It depends on Zn(2+) as a cofactor.

Its subcellular location is the cytoplasm. It carries out the reaction tRNA(Met) + L-methionine + ATP = L-methionyl-tRNA(Met) + AMP + diphosphate. Is required not only for elongation of protein synthesis but also for the initiation of all mRNA translation through initiator tRNA(fMet) aminoacylation. The polypeptide is Methionine--tRNA ligase (Aliivibrio fischeri (strain ATCC 700601 / ES114) (Vibrio fischeri)).